The primary structure comprises 303 residues: uncharacterized protein (303 aa).

NADP(+)-binding positions include 7 to 12 (GAGGVG) and Asn-101. Lys-184 acts as the Proton donor in catalysis. Glu-267 lines the NADP(+) pocket.

This sequence belongs to the ketopantoate reductase family.

This is an uncharacterized protein from Bacillus subtilis (strain 168).